Here is a 188-residue protein sequence, read N- to C-terminus: MEANGIENLTNPNQEREFIRRHHKHELVDNQCSSTLVKHINAPVHIVWSLVRRFDQPQKYKPFISRCVVKGNMEIGTVREVDVKSGLPATRSTERLELLDDNEHILSIRIVGGDHRLKNYSSIISLHPETIEGRIGTLVIESFVVDVPEGNTKDETCYFVEALIKCNLKSLADISERLAVQDTTESRV.

Positions 25-176 are START-like; that stretch reads HELVDNQCSS…NLKSLADISE (152 aa). Cys-32 and Cys-157 are oxidised to a cystine. Lys-61 is an abscisate binding site. Position 77 is a phosphothreonine; by CARK1 (Thr-77). Residues 85-89 carry the Gate loop motif; that stretch reads SGLPA. Abscisate-binding positions include 89–94, 116–122, and Glu-141; these read ATRSTE and RLKNYSS. Positions 115–117 match the Latch loop motif; sequence HRL.

This sequence belongs to the PYR/PYL/RCAR abscisic acid intracellular receptor family. As to quaternary structure, monomer. Homodimer. Binds ABA on one subunit only. interacts with ABI1 and HAB1, and possibly with other PP2Cs. Binds to CARs protein in an ABA-independent manner, both at the plasma membrane and in the nucleus. Interacts directly with CAR1 and CAR4. Interacts with MYB44, MYB73 and MYB77 in an ABA-independent manner. Interacts with DDA1. Interacts with CARK1 in the cytosol. Binds to ABI1 when phosphorylated by CARK1. Interacts with AIP1 in the nucleus. In terms of processing, phosphorylated by CARK1 especially in response to abscisic acid (ABA); this phosphorylation promotes its stability and inhibitory ability to ABI1. Ubiquitinated in DDA1- and CDD complex-dependent manner. Ubiquitination leads to its subsequent proteasomal degradation.

It is found in the cytoplasm. It localises to the cytosol. Its subcellular location is the nucleus. The protein localises to the cell membrane. Its function is as follows. Receptor for abscisic acid (ABA) required for ABA-mediated responses such as stomatal closure and germination inhibition. Inhibits the activity of group-A protein phosphatases type 2C (PP2Cs) in an ABA-independent manner but more efficiently when activated by ABA. Confers enhanced sensitivity to ABA. Can be activated by both (-)-ABA and (+)-ABA. Mediates crosstalk between ABA and auxin signaling to regulate lateral root growth. Required for lateral root growth suppression by ABA. In response to auxin, promotes lateral root growth by enhancing MYB77-dependent transcription of the auxin-responsive gene IAA19. Enhances the abilities of MYB44 and MYB73 to activate IAA19 gene. This is Abscisic acid receptor PYL8 from Arabidopsis thaliana (Mouse-ear cress).